The primary structure comprises 577 residues: Copine-8 (577 aa).

C2 domains lie at 19–146 (TSAT…RLEK) and 155–278 (KCGT…FNVY). Ca(2+) is bound by residues aspartate 52, aspartate 58, aspartate 112, aspartate 114, serine 117, lysine 122, aspartate 124, aspartate 186, aspartate 192, aspartate 248, aspartate 250, and aspartate 256. Residue serine 273 is modified to Phosphoserine. Residues 322–523 (NFTVAIDFTA…VQFVPFRDYI (202 aa)) form the VWFA domain.

Belongs to the copine family. Ca(2+) is required as a cofactor.

In terms of biological role, probable calcium-dependent phospholipid-binding protein that may play a role in calcium-mediated intracellular processes. In Mus musculus (Mouse), this protein is Copine-8.